Here is a 286-residue protein sequence, read N- to C-terminus: ATP synthase gamma chain (286 aa).

This sequence belongs to the ATPase gamma chain family. As to quaternary structure, F-type ATPases have 2 components, CF(1) - the catalytic core - and CF(0) - the membrane proton channel. CF(1) has five subunits: alpha(3), beta(3), gamma(1), delta(1), epsilon(1). CF(0) has three main subunits: a, b and c.

The protein localises to the cell inner membrane. Produces ATP from ADP in the presence of a proton gradient across the membrane. The gamma chain is believed to be important in regulating ATPase activity and the flow of protons through the CF(0) complex. The protein is ATP synthase gamma chain of Shewanella piezotolerans (strain WP3 / JCM 13877).